A 273-amino-acid polypeptide reads, in one-letter code: WIMGHMVNAIYQIDEFVNLGANSIETDVSFDDNANPEYTYHGIPCDCGRSCLKWENYNDFLKGLRSATTPGNSKYQSKLILVVFDLKTGSLYDNQASEAGKKLAKNLLKHYWNNGNNGGRAYIVLSIPDLNHYPLIKGFTDTLKQEGHPELLEKVGYDFSGNDAIGDVAKAYKKAGVSGHVWQSDGITNCLLRGLSRVKDAVANRDSGKGYINKVYYWTVDKRATTRDALDAGVDGVMTDYPDVIADVMNEAAYKNKVRLATYEDSPWVTFKK.

Residue H5 is part of the active site. E25 and D27 together coordinate Mg(2+). The active-site Nucleophile is H41. Cystine bridges form between C45–C51 and C47–C190. D85 contacts Mg(2+).

The protein belongs to the arthropod phospholipase D family. Class II subfamily. Requires Mg(2+) as cofactor. As to expression, expressed by the venom gland.

It localises to the secreted. The enzyme catalyses an N-(acyl)-sphingosylphosphocholine = an N-(acyl)-sphingosyl-1,3-cyclic phosphate + choline. It catalyses the reaction an N-(acyl)-sphingosylphosphoethanolamine = an N-(acyl)-sphingosyl-1,3-cyclic phosphate + ethanolamine. It carries out the reaction a 1-acyl-sn-glycero-3-phosphocholine = a 1-acyl-sn-glycero-2,3-cyclic phosphate + choline. The catalysed reaction is a 1-acyl-sn-glycero-3-phosphoethanolamine = a 1-acyl-sn-glycero-2,3-cyclic phosphate + ethanolamine. Dermonecrotic toxins cleave the phosphodiester linkage between the phosphate and headgroup of certain phospholipids (sphingolipid and lysolipid substrates), forming an alcohol (often choline) and a cyclic phosphate. This toxin acts on sphingomyelin (SM). It may also act on ceramide phosphoethanolamine (CPE), lysophosphatidylcholine (LPC) and lysophosphatidylethanolamine (LPE), but not on lysophosphatidylserine (LPS), and lysophosphatidylglycerol (LPG). It acts by transphosphatidylation, releasing exclusively cyclic phosphate products as second products. Induces dermonecrosis, hemolysis, increased vascular permeability, edema, inflammatory response, and platelet aggregation. This chain is Dermonecrotic toxin LhSicTox-alphaIA2bvi, found in Loxosceles hirsuta (Recluse spider).